A 625-amino-acid chain; its full sequence is Complex I assembly factor ACAD9, mitochondrial (625 aa).

A mitochondrion-targeting transit peptide spans 1–41 (MSGYVLFSRGATAAAAAARASRVLRVFTERRRTLHTSLQSC). Lysine 45 bears the N6-acetyllysine mark. Lysine 96 carries the N6-succinyllysine modification. Glutamate 430 (proton acceptor) is an active-site residue. Threonine 482 carries the post-translational modification Phosphothreonine. N6-acetyllysine; alternate is present on lysine 525. At lysine 525 the chain carries N6-succinyllysine; alternate.

This sequence belongs to the acyl-CoA dehydrogenase family. In terms of assembly, homodimer. Interacts with NDUFAF1 and ECSIT. Part of the mitochondrial complex I assembly/MCIA complex that comprises at least the core subunits TMEM126B, NDUFAF1, ECSIT and ACAD9 and complement subunits such as COA1 and TMEM186. Interacts with TMEM70 and TMEM242. Requires FAD as cofactor.

It is found in the mitochondrion inner membrane. The enzyme catalyses eicosanoyl-CoA + oxidized [electron-transfer flavoprotein] + H(+) = (2E)-eicosenoyl-CoA + reduced [electron-transfer flavoprotein]. The catalysed reaction is octadecanoyl-CoA + oxidized [electron-transfer flavoprotein] + H(+) = (2E)-octadecenoyl-CoA + reduced [electron-transfer flavoprotein]. It carries out the reaction oxidized [electron-transfer flavoprotein] + hexadecanoyl-CoA + H(+) = (2E)-hexadecenoyl-CoA + reduced [electron-transfer flavoprotein]. It catalyses the reaction decanoyl-CoA + oxidized [electron-transfer flavoprotein] + H(+) = (2E)-decenoyl-CoA + reduced [electron-transfer flavoprotein]. The enzyme catalyses nonanoyl-CoA + oxidized [electron-transfer flavoprotein] + H(+) = (2E)-nonenoyl-CoA + reduced [electron-transfer flavoprotein]. The catalysed reaction is pentadecanoyl-CoA + oxidized [electron-transfer flavoprotein] + H(+) = (2E)-pentadecenoyl-CoA + reduced [electron-transfer flavoprotein]. It carries out the reaction undecanoyl-CoA + oxidized [electron-transfer flavoprotein] + H(+) = trans-2-undecenoyl-CoA + reduced [electron-transfer flavoprotein]. It catalyses the reaction (9Z)-hexadecenoyl-CoA + oxidized [electron-transfer flavoprotein] + H(+) = (2E,9Z)-hexadecadienoyl-CoA + reduced [electron-transfer flavoprotein]. The enzyme catalyses heptadecanoyl-CoA + oxidized [electron-transfer flavoprotein] + H(+) = trans-2-heptadecenoyl-CoA + reduced [electron-transfer flavoprotein]. The catalysed reaction is (9E)-octadecenoyl-CoA + oxidized [electron-transfer flavoprotein] + H(+) = (2E,9E)-octadecadienoyl-CoA + reduced [electron-transfer flavoprotein]. It carries out the reaction oxidized [electron-transfer flavoprotein] + (9Z)-octadecenoyl-CoA + H(+) = (2E,9Z)-octadecadienoyl-CoA + reduced [electron-transfer flavoprotein]. It catalyses the reaction (9Z,12Z)-octadecadienoyl-CoA + oxidized [electron-transfer flavoprotein] + H(+) = (2E,9Z,12Z)-octadecatrienoyl-CoA + reduced [electron-transfer flavoprotein]. The enzyme catalyses (4Z,7Z,10Z,13Z,16Z,19Z)-docosahexaenoyl-CoA + oxidized [electron-transfer flavoprotein] + H(+) = (2E,4Z,7Z,10Z,13Z,16Z,19Z)-docosaheptaenoyl-CoA + reduced [electron-transfer flavoprotein]. The catalysed reaction is tetradecanoyl-CoA + oxidized [electron-transfer flavoprotein] + H(+) = (2E)-tetradecenoyl-CoA + reduced [electron-transfer flavoprotein]. As part of the MCIA complex, primarily participates in the assembly of the mitochondrial complex I and therefore plays a role in oxidative phosphorylation. This moonlighting protein also has a dehydrogenase activity toward a broad range of substrates with greater specificity for long-chain unsaturated acyl-CoAs. However, in vivo, it does not seem to play a primary role in fatty acid oxidation. In addition, the function in complex I assembly is independent of the dehydrogenase activity of the protein. The polypeptide is Complex I assembly factor ACAD9, mitochondrial (Rattus norvegicus (Rat)).